Reading from the N-terminus, the 136-residue chain is Large ribosomal subunit protein uL16c (136 aa).

The protein belongs to the universal ribosomal protein uL16 family. Part of the 50S ribosomal subunit.

Its subcellular location is the plastid. The protein resides in the chloroplast. The protein is Large ribosomal subunit protein uL16c of Saccharum hybrid (Sugarcane).